The sequence spans 382 residues: Mannitol-1-phosphate 5-dehydrogenase (382 aa).

Residue 3-14 participates in NAD(+) binding; it reads ALHFGAGNIGRG. Lys-269 is modified (N6-acetyllysine).

It belongs to the mannitol dehydrogenase family.

It catalyses the reaction D-mannitol 1-phosphate + NAD(+) = beta-D-fructose 6-phosphate + NADH + H(+). In Escherichia coli O7:K1 (strain IAI39 / ExPEC), this protein is Mannitol-1-phosphate 5-dehydrogenase.